A 312-amino-acid polypeptide reads, in one-letter code: tRNA dimethylallyltransferase (312 aa).

An ATP-binding site is contributed by 13–20 (GPTAVGKT). 15–20 (TAVGKT) is a binding site for substrate. 2 interaction with substrate tRNA regions span residues 38–41 (DSVQ) and 163–167 (QRVVR).

Belongs to the IPP transferase family. Monomer. It depends on Mg(2+) as a cofactor.

The catalysed reaction is adenosine(37) in tRNA + dimethylallyl diphosphate = N(6)-dimethylallyladenosine(37) in tRNA + diphosphate. Functionally, catalyzes the transfer of a dimethylallyl group onto the adenine at position 37 in tRNAs that read codons beginning with uridine, leading to the formation of N6-(dimethylallyl)adenosine (i(6)A). The polypeptide is tRNA dimethylallyltransferase (Exiguobacterium sibiricum (strain DSM 17290 / CCUG 55495 / CIP 109462 / JCM 13490 / 255-15)).